The chain runs to 375 residues: Porin Omp2b (375 aa).

An N-terminal signal peptide occupies residues 1–22 (MNIKSLLLGSAAALVAASGAQA).

This sequence belongs to the alphaproteobacteria porin family. In terms of assembly, homotrimer.

The protein resides in the cell outer membrane. Functionally, forms passive diffusion pores that allow small molecular weight hydrophilic materials across the outer membrane. The protein is Porin Omp2b (omp2b) of Brucella suis.